A 582-amino-acid chain; its full sequence is Transcription factor tau subunit sfc6 (582 aa).

The disordered stretch occupies residues 1–97; it reads MGPKSKEYEN…SAKKQSSKGL (97 aa). The span at 18–39 shows a compositional bias: acidic residues; it reads EDNDDDGDFVLENVMSEEDIEI. Positions 63–87 are enriched in polar residues; the sequence is QPLTPSSSKGAGNEPKSQNSSTTRG. WD repeat units lie at residues 221-262, 268-314, and 326-369; these read TQFL…NFKS, HDWG…VKFH, and FNDS…ECPL.

Component of the TFIIIC complex including sfc1, sfc3, sfc4, sfc6 and sfc7. The subunits are organized in two globular domains, tauA and tauB, connected by a proteolysis-sensitive and flexible linker. Interacts with sfc1, sfc3 and sfc4.

The protein localises to the nucleus. Its function is as follows. TFIIIC mediates tRNA and 5S RNA gene activation by binding to intragenic promoter elements. Upstream of the transcription start site, TFIIIC assembles the initiation complex TFIIIB-TFIIIC-tDNA, which is sufficient for RNA polymerase III recruitment and function. Part of the tauB domain of TFIIIC that binds boxB DNA promoter sites of tRNA and similar genes. Cooperates with sfc3 in DNA binding. Localizes to chromatin insulator sequence without recruiting RNA polymerase III and plays a role in nuclear organization. This is Transcription factor tau subunit sfc6 from Schizosaccharomyces pombe (strain 972 / ATCC 24843) (Fission yeast).